Reading from the N-terminus, the 199-residue chain is dTTP/UTP pyrophosphatase (199 aa).

The active-site Proton acceptor is Asp-73.

It belongs to the Maf family. YhdE subfamily. The cofactor is a divalent metal cation.

It localises to the cytoplasm. It catalyses the reaction dTTP + H2O = dTMP + diphosphate + H(+). It carries out the reaction UTP + H2O = UMP + diphosphate + H(+). Nucleoside triphosphate pyrophosphatase that hydrolyzes dTTP and UTP. May have a dual role in cell division arrest and in preventing the incorporation of modified nucleotides into cellular nucleic acids. In Caldicellulosiruptor saccharolyticus (strain ATCC 43494 / DSM 8903 / Tp8T 6331), this protein is dTTP/UTP pyrophosphatase.